The following is a 596-amino-acid chain: Endoribonuclease ZC3H12A (596 aa).

Disordered regions lie at residues 1-48 and 97-134; these read MSDP…TSEL and QALT…EGSD. A compositionally biased stretch (polar residues) spans 10-19; the sequence is VQESNPTMSL. A ubiquitin association domain region spans residues 42–87; the sequence is EAPTSELQMKVDFFRKLGYSSSEIHSVLQKLGVQADTNTVLGELVK. The segment at 81 to 150 is necessary for interaction with TANK; it reads VLGELVKHGS…DGSNVAMSHG (70 aa). Positions 112–281 are RNase; the sequence is GGSTPKPSTL…DKFMPPDDPL (170 aa). The RNase NYN domain maps to 135-290; that stretch reads LRPVVIDGSN…LGRHGPSLDN (156 aa). The RNA binding stretch occupies residues 214 to 220; sequence RRVGGKR. Asp-226 contacts Mg(2+). Disordered stretches follow at residues 278–306 and 340–417; these read DDPL…KQPC and NALL…PTEW. Residues 301 to 324 form a C3H1-type zinc finger; that stretch reads HRKQPCPYGKKCTYGIKCRFFHPE. The necessary for interaction with ZC3H12D stretch occupies residues 301-454; it reads HRKQPCPYGK…SELWGVRGGS (154 aa). Position 344 is a phosphoserine (Ser-344). The span at 356 to 368 shows a compositional bias: low complexity; that stretch reads QRPSPASQSSSVS. 2 positions are modified to phosphoserine: Ser-435 and Ser-439. Residues 511–543 are disordered; that stretch reads YWSEPYPLPPPTPVLQEPQRPSPGAGGGPWGRV. Over residues 524–533 the composition is skewed to low complexity; that stretch reads VLQEPQRPSP.

The protein belongs to the ZC3H12 family. In terms of assembly, oligomer. Found in a deubiquitination complex with TANK, USP10 and ZC3H12A; this complex inhibits genotoxic stress- or interleukin-1-beta-mediated NF-kappaB activation by promoting IKBKG or TRAF6 deubiquitination. Interacts with IKBKG; this interaction increases in response to DNA damage. Interacts with TANK; this interaction increases in response to DNA damage and serves as a bridge to anchor both TANK and USP10 into a deubiquitinating complex. Interacts with TRAF6; this interaction increases in response to DNA damage and is stimulated by TANK. Interacts with USP10; this interaction increases in response to DNA damage and serves as a bridge to anchor both TANK and USP10 into a deubiquitinating complex. Interacts with ZC3H12D. Interacts with TNRC6A. Interacts with IKBKB/IKKB. Interacts with IKBKB/IKKB. Interacts with IKBKB/IKKB. Interacts with BTRC; the interaction occurs when ZC3H12A is phosphorylated in a IKBKB/IKKB-dependent manner. Interacts with IRAK1; this interaction increases the interaction between ZC3H12A and IKBKB/IKKB. Interacts with UPF1; this interaction occurs in a mRNA translationally active- and termination-dependent manner and is essential for ZC3H12A-mediated degradation of target mRNAs. Associates with ribosomes. Interacts with ubiquitin. Mg(2+) serves as cofactor. In terms of processing, proteolytically cleaved between Arg-111 and Arg-214 by MALT1 in activated T-cells; cleavage at Arg-111 is critical for promoting ZC3H12A degradation in response to T-cell receptor (TCR) stimulation, and hence is necessary for prolonging the stability of a set of mRNAs controlling T-cell activation and Th17 cell differentiation. Post-translationally, phosphorylated by IRAK1; phosphorylation is necessary for subsequent phosphorylation by the I-kappa-B-kinase (IKK) complex. Phosphorylated by I-kappa-B-kinases (IKKs) at Ser-435 and Ser-439 upon lipopolysaccharide (LPS) or IL1B stimulation in macrophages through the MyD88-dependent signaling pathway; these phosphorylations promote rapid ubiquitin proteasome-mediated degradation of ZC3H12A in macrophages and hence allows its target mRNAs, such as IL6, to escape from degradation and accumulate during the inflammatory response. Ubiquitinated; ubiquitination is induced in response to interleukin IL1 receptor stimuli in a IKBKB/IKKB and IRAK1-dependent manner, leading to proteasome-mediated degradation. Expressed in CD4(+) helper T-cells (at protein level). Highly expressed in macrophages. Expressed in lung, lymph nodes, spleen and thymus. Expressed weakly in heart. Expressed weakly in cardiomyocytes (at protein level). Expressed in spleen, lung, intestine, brown adipose tissue and thymus. Weakly expressed in the heart. Weakly expressed in cardiomyocytes.

The protein localises to the nucleus. It localises to the cytoplasm. Its subcellular location is the rough endoplasmic reticulum membrane. The protein resides in the cytoplasmic granule. It is found in the P-body. Endoribonuclease involved in various biological functions such as cellular inflammatory response and immune homeostasis, glial differentiation of neuroprogenitor cells, cell death of cardiomyocytes, adipogenesis and angiogenesis. Functions as an endoribonuclease involved in mRNA decay. Modulates the inflammatory response by promoting the degradation of a set of translationally active cytokine-induced inflammation-related mRNAs, such as IL6 and IL12B, during the early phase of inflammation. Prevents aberrant T-cell-mediated immune reaction by degradation of multiple mRNAs controlling T-cell activation, such as those encoding cytokines (IL6 and IL2), cell surface receptors (ICOS, TNFRSF4 and TNFR2) and transcription factor (REL). Inhibits cooperatively with ZC3H12A the differentiation of helper T cells Th17 in lungs. They repress target mRNA encoding the Th17 cell-promoting factors IL6, ICOS, REL, IRF4, NFKBID and NFKBIZ. The cooperation requires RNA-binding by RC3H1 and the nuclease activity of ZC3H12A. Together with RC3H1, destabilizes TNFRSF4/OX40 mRNA by binding to the conserved stem loop structure in its 3'UTR. Self regulates by destabilizing its own mRNA. Cleaves mRNA harboring a stem-loop (SL), often located in their 3'-UTRs, during the early phase of inflammation in a helicase UPF1-dependent manner. Plays a role in the inhibition of microRNAs (miRNAs) biogenesis. Cleaves the terminal loop of a set of precursor miRNAs (pre-miRNAs) important for the regulation of the inflammatory response leading to their degradation, and thus preventing the biosynthesis of mature miRNAs. Also plays a role in promoting angiogenesis in response to inflammatory cytokines by inhibiting the production of antiangiogenic microRNAs via its anti-dicer RNase activity. Affects the overall ubiquitination of cellular proteins. Positively regulates deubiquitinase activity promoting the cleavage at 'Lys-48'- and 'Lys-63'-linked polyubiquitin chains on TNF receptor-associated factors (TRAFs), preventing JNK and NF-kappa-B signaling pathway activation, and hence negatively regulating macrophage-mediated inflammatory response and immune homeostasis. Induces also deubiquitination of the transcription factor HIF1A, probably leading to its stabilization and nuclear import, thereby positively regulating the expression of proangiogenic HIF1A-targeted genes. Involved in a TANK-dependent negative feedback response to attenuate NF-kappaB activation through the deubiquitination of IKBKG or TRAF6 in response to interleukin-1-beta (IL1B) stimulation or upon DNA damage. Prevents stress granules (SGs) formation and promotes macrophage apoptosis under stress conditions, including arsenite-induced oxidative stress, heat shock, and energy deprivation. Plays a role in the regulation of macrophage polarization; promotes IL4-induced polarization of macrophages M1 into anti-inflammatory M2 state. May also act as a transcription factor that regulates the expression of multiple genes involved in inflammatory response, angiogenesis, adipogenesis and apoptosis. Functions as a positive regulator of glial differentiation of neuroprogenitor cells through an amyloid precursor protein (APP)-dependent signaling pathway. Attenuates septic myocardial contractile dysfunction in response to lipopolysaccharide (LPS) by reducing I-kappa-B-kinase (IKK)-mediated NF-kappa-B activation, and hence myocardial pro-inflammatory cytokine production. The polypeptide is Endoribonuclease ZC3H12A (Mus musculus (Mouse)).